The sequence spans 345 residues: MGTTYKQSGVDIEAGDAFVERIKPHAARTMRPEVMGGVGGFGGLFALPPGKYQQPVLVAGTDGVGTKLKVAFAAGRHGTVGIDLVAMSVNDILTCGAEPLFFLDYFATGRLEVDDAAEVVKGIALGCEQAGCALLGGETAEMPGFYARGEYDLAGFCVGVVERAAIIDGKSVKPGDALIGLPSSGLHSNGYSLARKVLLDDGKLALDATPEGLDRPLVDALLEPTRIYVKDVLALLQAVKVKGLAHITGSGIPGNLPRCLPDGTRAVLSEQTWPKPPIFDLIAKLGSVARDEMFNTFNMGLGLILVVAKEDVAQALSVLSGRGVQAFEVGRVEAGQGEATAVIDP.

The protein belongs to the AIR synthase family.

Its subcellular location is the cytoplasm. It catalyses the reaction 2-formamido-N(1)-(5-O-phospho-beta-D-ribosyl)acetamidine + ATP = 5-amino-1-(5-phospho-beta-D-ribosyl)imidazole + ADP + phosphate + H(+). It functions in the pathway purine metabolism; IMP biosynthesis via de novo pathway; 5-amino-1-(5-phospho-D-ribosyl)imidazole from N(2)-formyl-N(1)-(5-phospho-D-ribosyl)glycinamide: step 2/2. The chain is Phosphoribosylformylglycinamidine cyclo-ligase from Myxococcus xanthus (strain DK1622).